A 125-amino-acid chain; its full sequence is Histone H2A (125 aa).

Positions 1 to 18 (MSGRGKGGKAKGKSKSRS) are enriched in basic residues. The disordered stretch occupies residues 1–23 (MSGRGKGGKAKGKSKSRSSRAGL). S2 carries the post-translational modification N-acetylserine. Phosphoserine is present on S2. Q104 bears the N5-methylglutamine mark.

This sequence belongs to the histone H2A family. In terms of assembly, the nucleosome is a histone octamer containing two molecules each of H2A, H2B, H3 and H4 assembled in one H3-H4 heterotetramer and two H2A-H2B heterodimers. The octamer wraps approximately 147 bp of DNA.

It localises to the nucleus. The protein resides in the chromosome. Functionally, core component of nucleosome. Nucleosomes wrap and compact DNA into chromatin, limiting DNA accessibility to the cellular machineries which require DNA as a template. Histones thereby play a central role in transcription regulation, DNA repair, DNA replication and chromosomal stability. DNA accessibility is regulated via a complex set of post-translational modifications of histones, also called histone code, and nucleosome remodeling. In Urechis caupo (Innkeeper worm), this protein is Histone H2A.